The following is a 128-amino-acid chain: MSNVPTELKYASSHEWVRSEGNGVYTVGITEHAQELLGDMVFVDLPEVGRTVAAGEDCAVAESVKAASDIYAPISGEIVAVNGELESSPELVNSGPYAEGFLFQIKASDEGELAKLLDATAYQASIDE.

Residues 24–106 enclose the Lipoyl-binding domain; it reads VYTVGITEHA…YAEGFLFQIK (83 aa). Lysine 65 carries the N6-lipoyllysine modification.

The protein belongs to the GcvH family. As to quaternary structure, the glycine cleavage system is composed of four proteins: P, T, L and H. It depends on (R)-lipoate as a cofactor.

Its function is as follows. The glycine cleavage system catalyzes the degradation of glycine. The H protein shuttles the methylamine group of glycine from the P protein to the T protein. The sequence is that of Glycine cleavage system H protein from Serratia proteamaculans (strain 568).